A 77-amino-acid polypeptide reads, in one-letter code: DNA-directed RNA polymerase subunit epsilon (77 aa).

Belongs to the RNA polymerase subunit epsilon family. In terms of assembly, RNAP is composed of a core of 2 alpha, a beta and a beta' subunit. The core is associated with a delta subunit, and at least one of epsilon or omega. When a sigma factor is associated with the core the holoenzyme is formed, which can initiate transcription.

The enzyme catalyses RNA(n) + a ribonucleoside 5'-triphosphate = RNA(n+1) + diphosphate. A non-essential component of RNA polymerase (RNAP). In Streptococcus pneumoniae (strain P1031), this protein is DNA-directed RNA polymerase subunit epsilon.